A 267-amino-acid chain; its full sequence is 4-hydroxy-tetrahydrodipicolinate reductase (267 aa).

Residues 8–13 (GAAGRM) and aspartate 34 contribute to the NAD(+) site. Arginine 35 serves as a coordination point for NADP(+). Residues 98-100 (GTT) and 122-125 (AANF) contribute to the NAD(+) site. Catalysis depends on histidine 155, which acts as the Proton donor/acceptor. Residue histidine 156 participates in (S)-2,3,4,5-tetrahydrodipicolinate binding. The Proton donor role is filled by lysine 159. (S)-2,3,4,5-tetrahydrodipicolinate is bound at residue 165–166 (GT).

It belongs to the DapB family.

Its subcellular location is the cytoplasm. The catalysed reaction is (S)-2,3,4,5-tetrahydrodipicolinate + NAD(+) + H2O = (2S,4S)-4-hydroxy-2,3,4,5-tetrahydrodipicolinate + NADH + H(+). It carries out the reaction (S)-2,3,4,5-tetrahydrodipicolinate + NADP(+) + H2O = (2S,4S)-4-hydroxy-2,3,4,5-tetrahydrodipicolinate + NADPH + H(+). The protein operates within amino-acid biosynthesis; L-lysine biosynthesis via DAP pathway; (S)-tetrahydrodipicolinate from L-aspartate: step 4/4. Its function is as follows. Catalyzes the conversion of 4-hydroxy-tetrahydrodipicolinate (HTPA) to tetrahydrodipicolinate. The sequence is that of 4-hydroxy-tetrahydrodipicolinate reductase from Ectopseudomonas mendocina (strain ymp) (Pseudomonas mendocina).